The sequence spans 480 residues: tRNA (guanine(37)-N(1))-methyltransferase (480 aa).

S-adenosyl-L-methionine is bound by residues H244, D292–L293, D321–G322, and N342.

This sequence belongs to the class I-like SAM-binding methyltransferase superfamily. TRM5/TYW2 family. In terms of assembly, monomer.

Its subcellular location is the mitochondrion matrix. The protein resides in the nucleus. It localises to the cytoplasm. The enzyme catalyses guanosine(37) in tRNA + S-adenosyl-L-methionine = N(1)-methylguanosine(37) in tRNA + S-adenosyl-L-homocysteine + H(+). Its function is as follows. Specifically methylates the N1 position of guanosine-37 in various cytoplasmic and mitochondrial tRNAs. Methylation is not dependent on the nature of the nucleoside 5' of the target nucleoside. This is the first step in the biosynthesis of wybutosine (yW), a modified base adjacent to the anticodon of tRNAs and required for accurate decoding. The sequence is that of tRNA (guanine(37)-N(1))-methyltransferase from Thalassiosira pseudonana (Marine diatom).